We begin with the raw amino-acid sequence, 197 residues long: Probable nicotinate-nucleotide adenylyltransferase (197 aa).

This sequence belongs to the NadD family.

The catalysed reaction is nicotinate beta-D-ribonucleotide + ATP + H(+) = deamido-NAD(+) + diphosphate. The protein operates within cofactor biosynthesis; NAD(+) biosynthesis; deamido-NAD(+) from nicotinate D-ribonucleotide: step 1/1. In terms of biological role, catalyzes the reversible adenylation of nicotinate mononucleotide (NaMN) to nicotinic acid adenine dinucleotide (NaAD). The chain is Probable nicotinate-nucleotide adenylyltransferase from Pseudothermotoga lettingae (strain ATCC BAA-301 / DSM 14385 / NBRC 107922 / TMO) (Thermotoga lettingae).